The sequence spans 180 residues: Small ribosomal subunit protein uS5 (180 aa).

Residues 1 to 20 (MAKMQGRMQGKVAPGDDRGD) are disordered. One can recognise an S5 DRBM domain in the interval 22–85 (LKEKMVAINR…DEARRKMIKV (64 aa)).

This sequence belongs to the universal ribosomal protein uS5 family. Part of the 30S ribosomal subunit. Contacts proteins S4 and S8.

Its function is as follows. With S4 and S12 plays an important role in translational accuracy. In terms of biological role, located at the back of the 30S subunit body where it stabilizes the conformation of the head with respect to the body. The chain is Small ribosomal subunit protein uS5 from Nitrosospira multiformis (strain ATCC 25196 / NCIMB 11849 / C 71).